The sequence spans 329 residues: ATP-dependent (S)-NAD(P)H-hydrate dehydratase (329 aa).

Residues 35 to 326 (TLQLVRNIIP…AEVGAAFSKL (292 aa)) form the YjeF C-terminal domain. Residue Tyr-67 is modified to Phosphotyrosine. (6S)-NADPHX contacts are provided by residues Gly-135 and 188–194 (NHMEFSR). Residues Asn-207 and Asn-222 are each glycosylated (N-linked (GlcNAc...) asparagine). ATP is bound by residues 228–232 (KGERD) and 247–256 (GSSRRCGGQG). Asp-257 contacts (6S)-NADPHX. An N-linked (GlcNAc...) asparagine glycan is attached at Asn-279.

This sequence belongs to the NnrD/CARKD family. Mg(2+) serves as cofactor.

The protein resides in the mitochondrion. The catalysed reaction is (6S)-NADHX + ATP = ADP + phosphate + NADH + H(+). The enzyme catalyses (6S)-NADPHX + ATP = ADP + phosphate + NADPH + H(+). In terms of biological role, catalyzes the dehydration of the S-form of NAD(P)HX at the expense of ATP, which is converted to ADP. Together with NAD(P)HX epimerase, which catalyzes the epimerization of the S- and R-forms, the enzyme allows the repair of both epimers of NAD(P)HX, a damaged form of NAD(P)H that is a result of enzymatic or heat-dependent hydration. The protein is ATP-dependent (S)-NAD(P)H-hydrate dehydratase of Pongo abelii (Sumatran orangutan).